The chain runs to 301 residues: Phospholipase A1 (301 aa).

A disulfide bridge links Cys-4 with Cys-87. Ser-137 serves as the catalytic Nucleophile. Asp-165 serves as the catalytic Charge relay system. Intrachain disulfides connect Cys-176/Cys-181 and Cys-219/Cys-228. Residue His-230 is the Charge relay system of the active site. 3 disulfides stabilise this stretch: Cys-245-Cys-269, Cys-246-Cys-294, and Cys-262-Cys-267.

This sequence belongs to the AB hydrolase superfamily. Lipase family. Expressed by the venom gland.

The protein localises to the secreted. It carries out the reaction a 1,2-diacyl-sn-glycero-3-phosphocholine + H2O = a 2-acyl-sn-glycero-3-phosphocholine + a fatty acid + H(+). In terms of biological role, catalyzes the hydrolysis of phosphatidylcholine with phospholipase A1 activity. May act as an allergen and induce hemolytic activity. The chain is Phospholipase A1 from Vespa crabro (European hornet).